Reading from the N-terminus, the 135-residue chain is T-cell receptor beta chain V region 3H.25 (135 aa).

The N-terminal stretch at 1 to 20 (MATRLLCYTVLCLLGARILN) is a signal peptide. The segment at 21–115 (SKVIQTPRYL…SALYLCASSL (95 aa)) is v segment. A disulfide bridge links cysteine 42 with cysteine 111. Residues 116–118 (FGT) form a d segment region. The j segment stretch occupies residues 119 to 135 (SDYTFGSGTRLLVIGKA).

The chain is T-cell receptor beta chain V region 3H.25 from Mus musculus (Mouse).